A 526-amino-acid chain; its full sequence is Bifunctional purine biosynthesis protein PurH (526 aa).

In terms of domain architecture, MGS-like spans 1–145 (MIRTALLSVS…KNHQDVTVLI (145 aa)).

It belongs to the PurH family.

It catalyses the reaction (6R)-10-formyltetrahydrofolate + 5-amino-1-(5-phospho-beta-D-ribosyl)imidazole-4-carboxamide = 5-formamido-1-(5-phospho-D-ribosyl)imidazole-4-carboxamide + (6S)-5,6,7,8-tetrahydrofolate. The catalysed reaction is IMP + H2O = 5-formamido-1-(5-phospho-D-ribosyl)imidazole-4-carboxamide. Its pathway is purine metabolism; IMP biosynthesis via de novo pathway; 5-formamido-1-(5-phospho-D-ribosyl)imidazole-4-carboxamide from 5-amino-1-(5-phospho-D-ribosyl)imidazole-4-carboxamide (10-formyl THF route): step 1/1. It participates in purine metabolism; IMP biosynthesis via de novo pathway; IMP from 5-formamido-1-(5-phospho-D-ribosyl)imidazole-4-carboxamide: step 1/1. The protein is Bifunctional purine biosynthesis protein PurH of Polynucleobacter necessarius subsp. necessarius (strain STIR1).